Reading from the N-terminus, the 236-residue chain is Growth-regulating factor 12 (236 aa).

A disordered region spans residues 1–27 (MLAEGRQVYLPPPPPSKLPRLSGTDPT). The QLQ domain maps to 74–109 (ALTFMQRQELEQQVLIYRYFAAGAPVPVHLVLPIWK). Positions 140-184 (EPEPGRCRRTDGKKWRCSRDVVPGHKYCERHVHRGRGRSRKPMEA) constitute a WRC domain. Short sequence motifs (bipartite nuclear localization signal) lie at residues 145–155 (RCRRTDGKKWR) and 173–180 (RGRGRSRK).

The protein belongs to the GRF family.

The protein resides in the nucleus. Its function is as follows. Transcription activator that plays a regulatory role in gibberellin-induced stem elongation. The chain is Growth-regulating factor 12 (GRF12) from Oryza sativa subsp. japonica (Rice).